The chain runs to 458 residues: tRNA modification GTPase MnmE (458 aa).

(6S)-5-formyl-5,6,7,8-tetrahydrofolate-binding residues include Arg-26, Glu-88, and Arg-127. In terms of domain architecture, TrmE-type G spans 224 to 378 (GLSTAIIGRP…IEDRINQLFF (155 aa)). K(+) is bound at residue Asn-234. Residues 234–239 (NVGKSS), 253–259 (TDIAGTT), and 278–281 (DTAG) each bind GTP. Mg(2+) is bound at residue Ser-238. K(+)-binding residues include Thr-253, Ile-255, and Thr-258. Thr-259 serves as a coordination point for Mg(2+). Position 458 (Lys-458) interacts with (6S)-5-formyl-5,6,7,8-tetrahydrofolate.

This sequence belongs to the TRAFAC class TrmE-Era-EngA-EngB-Septin-like GTPase superfamily. TrmE GTPase family. As to quaternary structure, homodimer. Heterotetramer of two MnmE and two MnmG subunits. The cofactor is K(+).

It localises to the cytoplasm. Exhibits a very high intrinsic GTPase hydrolysis rate. Involved in the addition of a carboxymethylaminomethyl (cmnm) group at the wobble position (U34) of certain tRNAs, forming tRNA-cmnm(5)s(2)U34. This chain is tRNA modification GTPase MnmE, found in Streptococcus pyogenes serotype M12 (strain MGAS9429).